Here is a 561-residue protein sequence, read N- to C-terminus: DNA ligase B (561 aa).

The active-site N6-AMP-lysine intermediate is the Lys-125.

It belongs to the NAD-dependent DNA ligase family. LigB subfamily.

It carries out the reaction NAD(+) + (deoxyribonucleotide)n-3'-hydroxyl + 5'-phospho-(deoxyribonucleotide)m = (deoxyribonucleotide)n+m + AMP + beta-nicotinamide D-nucleotide.. Functionally, catalyzes the formation of phosphodiester linkages between 5'-phosphoryl and 3'-hydroxyl groups in double-stranded DNA using NAD as a coenzyme and as the energy source for the reaction. This Salmonella newport (strain SL254) protein is DNA ligase B.